Reading from the N-terminus, the 87-residue chain is Lipid-anchored plasma membrane protein uvi15 (87 aa).

A disordered region spans residues Met1–Asp64. Low complexity predominate over residues Gln18–Pro41.

This sequence belongs to the CYSTM1 family. Palmitoylated.

The protein resides in the cell membrane. It is found in the cell tip. In terms of biological role, required for the maintenance of viability of cells in stationary phase and in starvation conditions. The sequence is that of Lipid-anchored plasma membrane protein uvi15 (uvi15) from Schizosaccharomyces pombe (strain 972 / ATCC 24843) (Fission yeast).